The chain runs to 1033 residues: NACHT, LRR and PYD domains-containing protein 11 (1033 aa).

In terms of domain architecture, Pyrin spans 1 to 91 (MAESDSTDFD…CRKIIGRRNR (91 aa)). The NACHT domain maps to 147 to 470 (LNVFLMGERA…AFLMAVPNYL (324 aa)). 153–160 (GERASGKT) contacts ATP. LRR repeat units follow at residues 588-611 (CCHL…LIRP), 632-655 (MESL…ILSK), 745-768 (GGSL…ILCD), 802-827 (SPTL…TFPL), 859-882 (NEKL…LLCG), and 919-944 (LERL…LISP).

The protein belongs to the NLRP family.

Its function is as follows. Involved in inflammation. In Homo sapiens (Human), this protein is NACHT, LRR and PYD domains-containing protein 11 (NLRP11).